The sequence spans 1579 residues: DNA-directed RNA polymerase II subunit RPB1 (1579 aa).

The Zn(2+) site is built by C68, C71, C78, H81, C108, C111, C149, and C171. Mg(2+) is bound by residues D485, D487, and D489. Positions 642–654 are bridging helix; the sequence is PQEFFFHAMAGRE. K1080 participates in a covalent cross-link: Glycyl lysine isopeptide (Lys-Gly) (interchain with G-Cter in ubiquitin). A compositionally biased stretch (low complexity) spans 1382 to 1565; sequence SPTYSPTSPS…NSPQYSPRSP (184 aa). The interval 1382 to 1579 is disordered; that stretch reads SPTYSPTSPS…DQNDDKDKKQ (198 aa). 16 consecutive repeat copies span residues 1385-1391, 1392-1398, 1399-1405, 1406-1412, 1413-1419, 1420-1426, 1427-1433, 1434-1440, 1441-1447, 1448-1454, 1455-1461, 1462-1468, 1469-1475, 1476-1482, 1483-1489, and 1490-1496. The segment at 1385 to 1566 is C-terminal domain (CTD); 26 X 7 AA approximate tandem repeats of Y-S-P-T-S-P-[S-A-Q]; the sequence is YSPTSPSYSP…SPQYSPRSPL (182 aa). Residues 1497-1503 form a 17; approximate repeat; it reads YSPTSPL. 7 tandem repeats follow at residues 1504–1510, 1511–1517, 1518–1524, 1525–1531, 1532–1538, 1539–1545, and 1546–1552. One copy of the 25; approximate repeat lies at 1553 to 1559; the sequence is YSPNSPQ. A 26; approximate repeat occupies 1560–1566; the sequence is YSPRSPL.

The protein belongs to the RNA polymerase beta' chain family. In terms of assembly, component of the RNA polymerase II (Pol II) complex consisting of 12 subunits. The tandem 7 residues repeats in the C-terminal domain (CTD) can be highly phosphorylated. The phosphorylation activates Pol II. Phosphorylation occurs mainly at residues 'Ser-2' and 'Ser-5' of the heptapeptide repeat. The phosphorylation state is believed to result from the balanced action of site-specific CTD kinases and phosphatase, and a 'CTD code' that specifies the position of Pol II within the transcription cycle has been proposed. In terms of processing, following transcription stress, the elongating form of RNA polymerase II (RNA pol IIo) is polyubiquitinated via 'Lys-63'-linkages on Lys-1080 at DNA damage sites without leading to degradation: ubiquitination promotes RNA pol IIo backtracking to allow access by the transcription-coupled nucleotide excision repair (TC-NER) machinery. Subsequent DEF1-dependent polyubiquitination by the elongin complex via 'Lys-48'-linkages may lead to proteasome-mediated degradation; presumably at stalled RNA pol II where TC-NER has failed, to halt global transcription and enable 'last resort' DNA repair pathways.

The protein localises to the nucleus. The enzyme catalyses RNA(n) + a ribonucleoside 5'-triphosphate = RNA(n+1) + diphosphate. Functionally, DNA-dependent RNA polymerase catalyzes the transcription of DNA into RNA using the four ribonucleoside triphosphates as substrates. Largest and catalytic component of RNA polymerase II which synthesizes mRNA precursors and many functional non-coding RNAs. Forms the polymerase active center together with the second largest subunit. Pol II is the central component of the basal RNA polymerase II transcription machinery. It is composed of mobile elements that move relative to each other. RPB1 is part of the core element with the central large cleft, the clamp element that moves to open and close the cleft and the jaws that are thought to grab the incoming DNA template. At the start of transcription, a single-stranded DNA template strand of the promoter is positioned within the central active site cleft of Pol II. A bridging helix emanates from RPB1 and crosses the cleft near the catalytic site and is thought to promote translocation of Pol II by acting as a ratchet that moves the RNA-DNA hybrid through the active site by switching from straight to bent conformations at each step of nucleotide addition. During transcription elongation, Pol II moves on the template as the transcript elongates. Elongation is influenced by the phosphorylation status of the C-terminal domain (CTD) of Pol II largest subunit (RPB1), which serves as a platform for assembly of factors that regulate transcription initiation, elongation, termination and mRNA processing. This chain is DNA-directed RNA polymerase II subunit RPB1 (RPB1), found in Meyerozyma guilliermondii (strain ATCC 6260 / CBS 566 / DSM 6381 / JCM 1539 / NBRC 10279 / NRRL Y-324) (Yeast).